We begin with the raw amino-acid sequence, 260 residues long: HTH-type transcriptional repressor NanR (260 aa).

The HTH gntR-type domain occupies 27–95 (KKLSDMVEEE…NGERARVSMP (69 aa)). Positions 55 to 74 (ERELMEFFNVGRPSVREALA) form a DNA-binding region, H-T-H motif.

It belongs to the NanR family.

Transcriptional repressor that controls expression of the genes required for the catabolism of sialic acids. In Enterobacter sp. (strain 638), this protein is HTH-type transcriptional repressor NanR.